A 497-amino-acid polypeptide reads, in one-letter code: Glycerol kinase (497 aa).

ADP is bound at residue Thr-12. ATP-binding residues include Thr-12, Thr-13, and Ser-14. A sn-glycerol 3-phosphate-binding site is contributed by Thr-12. Residue Arg-16 participates in ADP binding. Sn-glycerol 3-phosphate is bound by residues Arg-82, Glu-83, Tyr-134, and Asp-243. 5 residues coordinate glycerol: Arg-82, Glu-83, Tyr-134, Asp-243, and Gln-244. Thr-265 and Gly-308 together coordinate ADP. ATP contacts are provided by Thr-265, Gly-308, Gln-312, and Gly-409. 2 residues coordinate ADP: Gly-409 and Asn-413.

The protein belongs to the FGGY kinase family. As to quaternary structure, homotetramer and homodimer (in equilibrium).

The enzyme catalyses glycerol + ATP = sn-glycerol 3-phosphate + ADP + H(+). It participates in polyol metabolism; glycerol degradation via glycerol kinase pathway; sn-glycerol 3-phosphate from glycerol: step 1/1. With respect to regulation, activated by phosphorylation and inhibited by fructose 1,6-bisphosphate (FBP). Functionally, key enzyme in the regulation of glycerol uptake and metabolism. Catalyzes the phosphorylation of glycerol to yield sn-glycerol 3-phosphate. This chain is Glycerol kinase, found in Thermoanaerobacter sp. (strain X514).